The chain runs to 85 residues: Phosphocarrier protein HPr (85 aa).

In terms of domain architecture, HPr spans 1–85 (MFQRDIKITT…DLAKFLTTLK (85 aa)). Residue His15 is the Pros-phosphohistidine intermediate of the active site.

It belongs to the HPr family.

It is found in the cytoplasm. Its function is as follows. General (non sugar-specific) component of the phosphoenolpyruvate-dependent sugar phosphotransferase system (sugar PTS). This major carbohydrate active-transport system catalyzes the phosphorylation of incoming sugar substrates concomitantly with their translocation across the cell membrane. The phosphoryl group from phosphoenolpyruvate (PEP) is transferred to the phosphoryl carrier protein HPr by enzyme I. Phospho-HPr then transfers it to the PTS EIIA domain. The chain is Phosphocarrier protein HPr (ptsH) from Buchnera aphidicola subsp. Baizongia pistaciae (strain Bp).